Reading from the N-terminus, the 135-residue chain is Retinol-binding protein 1 (135 aa).

The important for interaction with STRA6 stretch occupies residues 22–32 (RALDVNVALRK). Lys-41, Met-63, and Gln-109 together coordinate all-trans-retinol.

Belongs to the calycin superfamily. Fatty-acid binding protein (FABP) family. As to quaternary structure, interacts (only as retinol-free apoprotein) with STRA6.

It is found in the cytoplasm. The protein resides in the lipid droplet. Cytoplasmic retinol-binding protein. Accepts retinol from the transport protein STRA6, and thereby contributes to retinol uptake, storage and retinoid homeostasis. The protein is Retinol-binding protein 1 (RBP1) of Bos taurus (Bovine).